We begin with the raw amino-acid sequence, 221 residues long: Glutathione S-transferase 1 (221 aa).

The 82-residue stretch at glutamine 7–proline 88 folds into the GST N-terminal domain. Residues serine 17–arginine 22, valine 60, aspartate 72–serine 73, glutamine 112, and asparagine 116–alanine 118 contribute to the glutathione site. The GST C-terminal domain maps to aspartate 93–serine 221.

This sequence belongs to the GST superfamily. Zeta family.

It carries out the reaction RX + glutathione = an S-substituted glutathione + a halide anion + H(+). In terms of biological role, conjugation of reduced glutathione to a wide number of exogenous and endogenous hydrophobic electrophiles. In Dianthus caryophyllus (Carnation), this protein is Glutathione S-transferase 1 (GST1).